The following is a 386-amino-acid chain: SET and MYND domain-containing protein DDB_G0273589 (386 aa).

The SET domain occupies 6–294 (NGLELKSSEN…KGDQLTISYI (289 aa)). The MYND-type zinc-finger motif lies at 51–94 (CFNCIKQLPSVIKLSLKCNQCNEIWYCNEQCKNENINKHQHYEC). The stretch at 136–171 (NNKFIEQQLNNNNNNNNDNEQLTNTLDDVFDLVENQ) forms a coiled coil.

The protein belongs to the class V-like SAM-binding methyltransferase superfamily.

Functionally, probable methyltransferase. The chain is SET and MYND domain-containing protein DDB_G0273589 from Dictyostelium discoideum (Social amoeba).